Here is a 98-residue protein sequence, read N- to C-terminus: uncharacterized protein (98 aa).

This sequence belongs to the HesB/IscA family.

This is an uncharacterized protein from Staphylococcus aureus (strain MRSA252).